The chain runs to 299 residues: Trans-aconitate 3-methyltransferase (299 aa).

Ser2 carries the N-acetylserine modification.

Belongs to the methyltransferase superfamily. Tam family.

It is found in the cytoplasm. It catalyses the reaction trans-aconitate + S-adenosyl-L-methionine = (E)-2-(methoxycarbonylmethyl)but-2-enedioate + S-adenosyl-L-homocysteine. In terms of biological role, catalyzes the S-adenosylmethionine monomethyl esterification of trans-aconitate and 3-isopropylmalate at high affinity and of other molecules like cis-aconitate, isocitrate, and citrate at lower velocities and affinities. The function of trans-aconitate methylation appears to be in reducing the toxicity of this spontaneous breakdown product of cis-aconitate. The role of 3-isopropylmalate methylation is unclear but may represent a metabolic branch at 3-isopropylmalate, where some of the material is taken in the pathway leading to leucine and some is taken in a pathway to the 3-isopropylmalate methyl ester, a molecule that provides a signal to switch from vegetative to invasive growth in response to amino acid starvation. In Saccharomyces cerevisiae (strain ATCC 204508 / S288c) (Baker's yeast), this protein is Trans-aconitate 3-methyltransferase (TMT1).